Here is a 157-residue protein sequence, read N- to C-terminus: S-ribosylhomocysteine lyase (157 aa).

Fe cation contacts are provided by His-53, His-57, and Cys-124.

Belongs to the LuxS family. As to quaternary structure, homodimer. The cofactor is Fe cation.

It carries out the reaction S-(5-deoxy-D-ribos-5-yl)-L-homocysteine = (S)-4,5-dihydroxypentane-2,3-dione + L-homocysteine. In terms of biological role, involved in the synthesis of autoinducer 2 (AI-2) which is secreted by bacteria and is used to communicate both the cell density and the metabolic potential of the environment. The regulation of gene expression in response to changes in cell density is called quorum sensing. Catalyzes the transformation of S-ribosylhomocysteine (RHC) to homocysteine (HC) and 4,5-dihydroxy-2,3-pentadione (DPD). The sequence is that of S-ribosylhomocysteine lyase from Borreliella afzelii (strain PKo) (Borrelia afzelii).